The sequence spans 704 residues: Elongation factor G (704 aa).

The 284-residue stretch at 8–291 folds into the tr-type G domain; it reads DKVRNIGIMA…AVVDYLASPL (284 aa). Residues 17 to 24, 90 to 94, and 144 to 147 contribute to the GTP site; these read AHIDAGKT, DTPGH, and NKMD.

This sequence belongs to the TRAFAC class translation factor GTPase superfamily. Classic translation factor GTPase family. EF-G/EF-2 subfamily.

It localises to the cytoplasm. Functionally, catalyzes the GTP-dependent ribosomal translocation step during translation elongation. During this step, the ribosome changes from the pre-translocational (PRE) to the post-translocational (POST) state as the newly formed A-site-bound peptidyl-tRNA and P-site-bound deacylated tRNA move to the P and E sites, respectively. Catalyzes the coordinated movement of the two tRNA molecules, the mRNA and conformational changes in the ribosome. The sequence is that of Elongation factor G from Chlorobium luteolum (strain DSM 273 / BCRC 81028 / 2530) (Pelodictyon luteolum).